Reading from the N-terminus, the 437-residue chain is Coiled-coil domain-containing protein 78 (437 aa).

Coiled-coil stretches lie at residues 83 to 114, 147 to 287, and 360 to 408; these read HLRE…LHGN, EELK…QRQE, and QRLQ…YKQE.

The protein belongs to the CCDC78 family.

The protein localises to the cytoplasm. The protein resides in the cytoskeleton. Its subcellular location is the microtubule organizing center. It localises to the centrosome. It is found in the centriole. The protein localises to the perinuclear region. The protein resides in the cell membrane. Its subcellular location is the sarcolemma. It localises to the sarcoplasmic reticulum. Component of the deuterosome, a structure that promotes de novo centriole amplification in multiciliated cells that can generate more than 100 centrioles. Deuterosome-mediated centriole amplification occurs in terminally differentiated multiciliated cells (G1/0) and not in S phase. Essential for centriole amplification and is required for CEP152 localization to the deuterosome. The polypeptide is Coiled-coil domain-containing protein 78 (Ccdc78) (Mus musculus (Mouse)).